An 88-amino-acid chain; its full sequence is MANTPSAKKAVRKIAARTEINKSRRSRVRTFVRKLEDALLSGDKQAAEVAFKAVEPELMRAASKGVVHKNTAARKVSRLAKRVKALNA.

Belongs to the bacterial ribosomal protein bS20 family.

Its function is as follows. Binds directly to 16S ribosomal RNA. The polypeptide is Small ribosomal subunit protein bS20 (Brucella abortus (strain S19)).